A 192-amino-acid chain; its full sequence is MVDFEELLSKTQEVEKKKIDEELKKAFTEANLIVDEAYNEILSEYSKRIQEIISKNIEALRGEEAKLEVETKRAVNKEKDYWVQQVFQKTLDELEKIANTKDYKNRIESILSRELTEGAIVYCSNNDKKFIEGILTTKRINNVSVEVDNSIKGGVKIYYPDKKLTRDFTLKTILNQIFEDLRDDVARILFGE.

The protein belongs to the V-ATPase E subunit family. As to quaternary structure, has multiple subunits with at least A(3), B(3), C, D, E, F, H, I and proteolipid K(x).

It is found in the cell membrane. Component of the A-type ATP synthase that produces ATP from ADP in the presence of a proton gradient across the membrane. The protein is A-type ATP synthase subunit E of Sulfolobus acidocaldarius (strain ATCC 33909 / DSM 639 / JCM 8929 / NBRC 15157 / NCIMB 11770).